The chain runs to 316 residues: Protoheme IX farnesyltransferase 2 (316 aa).

Polar residues predominate over residues 1-15; the sequence is MEQNLNSEQKPQSSA. The segment at 1 to 24 is disordered; it reads MEQNLNSEQKPQSSAKPRGKSSRS. 7 helical membrane passes run 62–82, 117–137, 163–183, 188–208, 231–251, 252–272, and 293–313; these read IPEM…AGAF, IVML…AAAF, IGSI…STDI, IARF…AIAI, TYYQ…LFGS, LSVG…VMSI, and LFHM…GVIF.

Belongs to the UbiA prenyltransferase family. Protoheme IX farnesyltransferase subfamily. Interacts with CtaA.

It localises to the cell membrane. The catalysed reaction is heme b + (2E,6E)-farnesyl diphosphate + H2O = Fe(II)-heme o + diphosphate. It functions in the pathway porphyrin-containing compound metabolism; heme O biosynthesis; heme O from protoheme: step 1/1. Functionally, converts heme B (protoheme IX) to heme O by substitution of the vinyl group on carbon 2 of heme B porphyrin ring with a hydroxyethyl farnesyl side group. The chain is Protoheme IX farnesyltransferase 2 from Lysinibacillus sphaericus (strain C3-41).